A 1153-amino-acid chain; its full sequence is Nitric oxide synthase (1153 aa).

Serine 3 lines the (6R)-L-erythro-5,6,7,8-tetrahydrobiopterin pocket. Position 82 (cysteine 82) interacts with heme b. Positions 145, 254, and 264 each coordinate L-arginine. Phenylalanine 358 contacts (6R)-L-erythro-5,6,7,8-tetrahydrobiopterin. The tract at residues 397–417 is calmodulin-binding; it reads PKRKLGFKALARAVEFSASLM. Positions 427–610 constitute a Flavodoxin-like domain; sequence CSIFYATETG…SFRAWSEEVF (184 aa). 556–587 is an FMN binding site; sequence VFGLGSKAYPYYAAYGKYIYLMLQELGAERLV. The FAD-binding FR-type domain occupies 660-903; the sequence is KEVMPLILAE…LRSAPHFHLP (244 aa). FAD contacts are provided by residues 697–708 and 836–846; these read YAPGDHVAIFPA and LQPRYYSISSS. NADP(+) is bound at residue 911 to 929; sequence IMIGPGSGIAPFRSFWQQR. 11 repeat units span residues 934–940, 941–947, 948–954, 955–961, 962–968, 969–975, 976–982, 983–989, 990–996, 997–1003, and 1004–1010. Positions 934-1010 are 11 X 7 AA tandem repeats of E-[NTR]-[ST]-[IM]-[PLQ]-[SP]-[CW]; sequence ENTMPSCENT…PSWERTMQPC (77 aa). 1089-1104 contributes to the NADP(+) binding site; sequence GGHFYVSGDVSMAHDV.

Belongs to the NOS family. Requires heme b as cofactor. It depends on FAD as a cofactor. FMN serves as cofactor. As to expression, expressed in the central nervous system, in the serotonergic cerebral giant cells. The isoform Long and isoform Short are expressed equally in the CNS.

The catalysed reaction is 2 L-arginine + 3 NADPH + 4 O2 + H(+) = 2 L-citrulline + 2 nitric oxide + 3 NADP(+) + 4 H2O. With respect to regulation, stimulated by calcium/calmodulin. In terms of biological role, produces nitric oxide (NO) which is a messenger molecule with diverse functions throughout the body. The chain is Nitric oxide synthase (NOS) from Lymnaea stagnalis (Great pond snail).